Consider the following 188-residue polypeptide: Elongation factor P (188 aa).

This sequence belongs to the elongation factor P family.

It is found in the cytoplasm. It functions in the pathway protein biosynthesis; polypeptide chain elongation. Functionally, involved in peptide bond synthesis. Stimulates efficient translation and peptide-bond synthesis on native or reconstituted 70S ribosomes in vitro. Probably functions indirectly by altering the affinity of the ribosome for aminoacyl-tRNA, thus increasing their reactivity as acceptors for peptidyl transferase. This is Elongation factor P from Streptomyces coelicolor (strain ATCC BAA-471 / A3(2) / M145).